We begin with the raw amino-acid sequence, 140 residues long: Ribosome-binding factor A (140 aa).

Residues 118–133 (DEAKQQKHNGKDKTDT) are compositionally biased toward basic and acidic residues. Residues 118–140 (DEAKQQKHNGKDKTDTADSEGEE) are disordered.

This sequence belongs to the RbfA family. Monomer. Binds 30S ribosomal subunits, but not 50S ribosomal subunits or 70S ribosomes.

It localises to the cytoplasm. In terms of biological role, one of several proteins that assist in the late maturation steps of the functional core of the 30S ribosomal subunit. Associates with free 30S ribosomal subunits (but not with 30S subunits that are part of 70S ribosomes or polysomes). Required for efficient processing of 16S rRNA. May interact with the 5'-terminal helix region of 16S rRNA. The polypeptide is Ribosome-binding factor A (Shewanella woodyi (strain ATCC 51908 / MS32)).